Consider the following 548-residue polypeptide: Esterase-5A (548 aa).

An N-terminal signal peptide occupies residues Met1–Ala19. The cysteines at positions 87 and 106 are disulfide-linked. 2 N-linked (GlcNAc...) asparagine glycosylation sites follow: Asn95 and Asn116. The active-site Acyl-ester intermediate is the Ser210. The cysteines at positions 262 and 274 are disulfide-linked. N-linked (GlcNAc...) asparagine glycosylation occurs at Asn479. A disulfide bridge links Cys518 with Cys539.

It belongs to the type-B carboxylesterase/lipase family.

It localises to the secreted. It carries out the reaction a carboxylic ester + H2O = an alcohol + a carboxylate + H(+). This Drosophila persimilis (Fruit fly) protein is Esterase-5A (Est-5A).